The sequence spans 465 residues: Clusterin-like protein 1 (465 aa).

The N-terminal stretch at 1–20 is a signal peptide; the sequence is MKPPILVFIVYLLQLRDCQC. Positions 62-107 form a coiled coil; sequence LMERREEEHSKLMRTLKKCREEKQEALKLMNEVQEHLEEEERLCQV. 5 disulfides stabilise this stretch: C105-C333, C116-C325, C119-C322, C124-C315, and C131-C305. N-linked (GlcNAc...) asparagine glycans are attached at residues N196 and N257. The disordered stretch occupies residues 280–300; sequence LSKQDKDSAHGGPSSTTWPVR. N-linked (GlcNAc...) asparagine glycans are attached at residues N311, N351, N412, and N430.

It belongs to the clusterin family.

It is found in the secreted. This is Clusterin-like protein 1 from Bos taurus (Bovine).